Reading from the N-terminus, the 336-residue chain is HTH-type transcriptional regulator RafR (336 aa).

Residues Ser2–Thr55 form the HTH lacI-type domain. A DNA-binding region (H-T-H motif) is located at residues Leu3 to Gly22.

In terms of assembly, homodimer.

Repressor that negatively controls the expression of the raffinose (raf) operon by binding to the raf operator (rafO) DNA. Acts by binding to two operator sites, O1 and 02, which flank the -35 raf promoter box. RafR bound to 02 alone results in 45 % repression of transcription, whereas RafR bound to O1 leads to only 6% repression. The polypeptide is HTH-type transcriptional regulator RafR (Escherichia coli).